We begin with the raw amino-acid sequence, 154 residues long: MDRQLFENTEERPRTLHQLCEVVNKPLLELQLGCVFCKKALTASEVYNFAYTDLRVVYRDGYPYGVCKFCLLFYSKVRKLRYYNCSVYGASLEALTKKKLSDLSIRCYRCQHPLTPEEKQLHCDYKKRFHKISHMWTGSCLTCWRHTTATESAV.

Zinc fingers lie at residues 34–70 (CVFC…CKFC) and 107–143 (CYRC…CLTC).

The protein belongs to the papillomaviridae E6 protein family. In terms of assembly, forms homodimers. Interacts with ubiquitin-protein ligase UBE3A/E6-AP; this interaction stimulates UBE3A ubiquitin activity. Interacts with host TP53 and EP300; this interaction inhibits TP53 activity.

Its subcellular location is the host cytoplasm. It localises to the host nucleus. In terms of biological role, plays a major role in the induction and maintenance of cellular transformation. E6 associates with host UBE3A/E6-AP ubiquitin-protein ligase and modulates its activity. Sequesters tumor suppressor TP53 in the host cytoplasm and modulates its activity by interacting with host EP300 that results in the reduction of TP53 acetylation and activation. In turn, apoptosis induced by DNA damage is inhibited. E6 also protects host keratinocytes from apoptosis by mediating the degradation of host BAK1. May also inhibit host immune response. This chain is Protein E6, found in Human papillomavirus type 53.